A 101-amino-acid chain; its full sequence is Replication restart protein PriB (101 aa).

An SSB domain is found at 1–101; that stretch reads MTTNNLVLAG…LHAENVELKT (101 aa).

This sequence belongs to the PriB family. As to quaternary structure, homodimer. Interacts with PriA and DnaT. Component of the replication restart primosome. Primosome assembly occurs via a 'hand-off' mechanism. PriA binds to replication forks, subsequently PriB then DnaT bind; DnaT then displaces ssDNA to generate the helicase loading substrate.

Functionally, involved in the restart of stalled replication forks, which reloads the replicative helicase on sites other than the origin of replication; the PriA-PriB pathway is the major replication restart pathway. During primosome assembly it facilitates complex formation between PriA and DnaT on DNA; stabilizes PriA on DNA. Stimulates the DNA unwinding activity of PriA helicase. The protein is Replication restart protein PriB of Shewanella piezotolerans (strain WP3 / JCM 13877).